The chain runs to 116 residues: U16-barytoxin-Tl1a (116 aa).

Positions methionine 1–alanine 20 are cleaved as a signal peptide. Residues lysine 21 to arginine 74 constitute a propeptide that is removed on maturation. Cystine bridges form between cysteine 75–cysteine 90, cysteine 82–cysteine 95, and cysteine 89–cysteine 110.

Belongs to the neurotoxin 14 (magi-1) family. 06 (ICK-Trit) subfamily. In terms of tissue distribution, expressed by the venom gland.

It is found in the secreted. Functionally, ion channel inhibitor. The protein is U16-barytoxin-Tl1a of Trittame loki (Brush-footed trapdoor spider).